Reading from the N-terminus, the 98-residue chain is Citrate lyase acyl carrier protein (98 aa).

Ser14 carries the O-(phosphoribosyl dephospho-coenzyme A)serine modification.

Belongs to the CitD family. In terms of assembly, oligomer with a subunit composition of (alpha,beta,gamma)6.

It localises to the cytoplasm. In terms of biological role, covalent carrier of the coenzyme of citrate lyase. In Salmonella arizonae (strain ATCC BAA-731 / CDC346-86 / RSK2980), this protein is Citrate lyase acyl carrier protein.